The following is a 242-amino-acid chain: ATP synthase subunit a (242 aa).

A run of 5 helical transmembrane segments spans residues 21-41 (LASV…AIVC), 83-103 (AVTL…FAIV), 118-137 (ATVT…YYGI), 175-195 (LYGN…LFFE), and 198-218 (AWGW…SIFV).

It belongs to the ATPase A chain family. As to quaternary structure, F-type ATPases have 2 components, CF(1) - the catalytic core - and CF(0) - the membrane proton channel. CF(1) has five subunits: alpha(3), beta(3), gamma(1), delta(1), epsilon(1). CF(0) has three main subunits: a(1), b(2) and c(9-12). The alpha and beta chains form an alternating ring which encloses part of the gamma chain. CF(1) is attached to CF(0) by a central stalk formed by the gamma and epsilon chains, while a peripheral stalk is formed by the delta and b chains.

The protein resides in the cell membrane. Functionally, key component of the proton channel; it plays a direct role in the translocation of protons across the membrane. This Staphylococcus epidermidis (strain ATCC 35984 / DSM 28319 / BCRC 17069 / CCUG 31568 / BM 3577 / RP62A) protein is ATP synthase subunit a.